A 576-amino-acid chain; its full sequence is K(+)/H(+) antiporter NhaP2 (576 aa).

A run of 13 helical transmembrane segments spans residues 6 to 26, 34 to 54, 58 to 78, 87 to 107, 109 to 129, 163 to 183, 185 to 205, 219 to 239, 242 to 262, 271 to 291, 299 to 319, 335 to 355, and 359 to 379; these read INSFFLIGALLTAVSVLLSPM, ILLIFLAVGILAGEDGPGGIL, YSTAYLVSNLALAIILLDGGM, VALWPALSLATFGVAITTSIT, MMAAWLFDLHWLQGLLVGAIV, PMAVFLTVTLIAILANVDTEM, FSFMFISFIKQFGLGICLGLG, LADGLYSILVLSGGLIIYAAS, LGGSGILSIYLVGLFLGNKPT, VLDGMTWVSQIGMFLVLGLLL, ILIPGFALAFGMILFARPVAV, WFISWVGLRGAVPIILAVFPM, and LPGAQLYFNLAFFVVLVSLLV. Residues 405–486 enclose the RCK C-terminal domain; that stretch reads SGVEIYPSSE…LEALSNLFSQ (82 aa).

The protein belongs to the monovalent cation:proton antiporter 1 (CPA1) transporter (TC 2.A.36) family. NhaP2 subfamily.

Its subcellular location is the cell inner membrane. The enzyme catalyses K(+)(in) + H(+)(out) = K(+)(out) + H(+)(in). In terms of biological role, k(+)/H(+) antiporter that extrudes potassium in exchange for external protons and maintains the internal concentration of potassium under toxic levels. The sequence is that of K(+)/H(+) antiporter NhaP2 from Shewanella baltica (strain OS195).